The primary structure comprises 585 residues: MDLPGDSSPPGQPRLCRQPLTRALWGARSPKRPRLQLPGAPSPLEKASRRVLAVVLEDVMAVHMVPVVPSKQTSIPQHHSYHQDPVHRQPPASPPRQAGWSSQARPPDPLCLCREPLSRIHRTSSTLRRRSRTTPGPEEGPSQKVDRAPQPTLVVMLEDIASPRPPAEGFIDETPNFIIPAQRAEPMRIVRQPTPPPGDLEPPFQPSALPADPLESPPTAPDPALELPSTPPPSSLLRPRLSPWGLAPLFRSVRSKLESFADIFLTPNKTPQPPPPSPPMKLELKIAISEAEQSGAAEGTASVSPRPPIRQWRTQDHNTPALLPKPSLGRSYSCPDLGPPGPGTCTWPPAPPQPSRPRPRRHTVGGGEMARAPPPPRPCLRKEVFPLGGVGASPSLTTSCSSTASTSFSEPAEPRLGSTKGKEPRASKDQVLSEPETKTMGKVSRFRIRRTPARPQLNLTPMGLPRPIRLNKKEFSLEEIYTNKNYQSPTTRRTFETIFEEPRERNGTLIFTSSRKLRRAVEFRDSSLPRSRRPSRGVRAAGGRTVPPNVAPSPDVGPLLQQRLEELDALLLEEETVDREQPHWT.

Met1 carries the N-acetylmethionine modification. The sufficient for heterochromatin association in interphase and chromatin association in anaphase stretch occupies residues 1–135 (MDLPGDSSPP…TLRRRSRTTP (135 aa)). 3 disordered regions span residues 23 to 46 (ALWG…PLEK), 73 to 150 (TSIP…RAPQ), and 189 to 241 (IVRQ…RPRL). The tract at residues 85–378 (PVHRQPPASP…MARAPPPPRP (294 aa)) is required for the interaction with GRB2 and sufficient to promote the phosphorylation of AKT and cell proliferation. A compositionally biased stretch (basic residues) spans 119–132 (RIHRTSSTLRRRSR). Positions 136–365 (GPEEGPSQKV…RPRPRRHTVG (230 aa)) are required for nuclear lamina association. The segment covering 193–205 (PTPPPGDLEPPFQ) has biased composition (pro residues). Ser277 is modified (phosphoserine). Disordered stretches follow at residues 290-445 (EAEQ…KVSR) and 525-557 (DSSL…PDVG). Pro residues predominate over residues 337-356 (LGPPGPGTCTWPPAPPQPSR). Residues 393-409 (SPSLTTSCSSTASTSFS) are compositionally biased toward low complexity. A required for nuclear localization region spans residues 518–535 (RRAVEFRDSSLPRSRRPS).

As to quaternary structure, interacts (via proline-rich region) with GRB2 (via SH3 domain 2). Interacts (via N-terminus) with CBX5.

The protein localises to the chromosome. Its subcellular location is the nucleus. The protein resides in the nucleus lamina. It is found in the nucleoplasm. Functions in tethering peripheral heterochromatin to the nuclear lamina during interphase, possibly through the interaction with heterochromatin protein CBX5/HP1 alpha. Might play a role in reattaching heterochromatin to the nuclear lamina at mitotic exit. Promotes myoblast differentiation during skeletal myogenesis, possibly by stimulating transcription factor MyoD activity via binding to CBX5/HP1 alpha. Involved in the positive regulation of the PI3K-Akt-mTOR signaling pathway and in promoting cell proliferation, possibly via binding to GRB2. The chain is Proline-rich protein 14 (PRR14) from Homo sapiens (Human).